A 393-amino-acid polypeptide reads, in one-letter code: MNDVFLKALPVLQKLTTAGFEAYFVGGSVRDYLLNRTISDVDIATSAFPEEVKEIFQTSYDTGIAHGTVTVRENNEFYEVTTFRTEGTYEDFRRPSEVTFIRSLEEDLKRRDFTMNAIAMDEHFALQDPFSGQLAIQNKEIKAVGKASERFHEDALRMMRAVRFLSQLDFELDKETEKALESQIELLQHTSVERITVEWLKMMKGKAAKRAIELLLKVKMETYLPGLKDEKSALSEFASWDWEKRTTEESIWLGLVVAVKPNNVNAFLKAWKLPNKTIQLVNKAYQYALNMKETWLTEELYHAGKAVFSLVNELNVIRGQENNQHKVSQAYEALPIHSKKDLAITGADLLKWSGESAGPWVKETLDKVECGVLSNEINNEKIQIKRWLGYHEE.

ATP is bound by residues G27 and R30. Positions 27 and 30 each coordinate CTP. Residues D40 and D42 each contribute to the Mg(2+) site. 5 residues coordinate ATP: R111, D154, R157, R160, and R163. 5 residues coordinate CTP: R111, D154, R157, R160, and R163.

Belongs to the tRNA nucleotidyltransferase/poly(A) polymerase family. Bacterial CCA-adding enzyme type 3 subfamily. Homodimer. The cofactor is Mg(2+).

It carries out the reaction a tRNA precursor + 2 CTP + ATP = a tRNA with a 3' CCA end + 3 diphosphate. The catalysed reaction is a tRNA with a 3' CCA end + 2 CTP + ATP = a tRNA with a 3' CCACCA end + 3 diphosphate. Catalyzes the addition and repair of the essential 3'-terminal CCA sequence in tRNAs without using a nucleic acid template. Adds these three nucleotides in the order of C, C, and A to the tRNA nucleotide-73, using CTP and ATP as substrates and producing inorganic pyrophosphate. tRNA 3'-terminal CCA addition is required both for tRNA processing and repair. Also involved in tRNA surveillance by mediating tandem CCA addition to generate a CCACCA at the 3' terminus of unstable tRNAs. While stable tRNAs receive only 3'-terminal CCA, unstable tRNAs are marked with CCACCA and rapidly degraded. This is CCA-adding enzyme from Listeria monocytogenes serotype 4b (strain CLIP80459).